Reading from the N-terminus, the 98-residue chain is NADH-ubiquinone oxidoreductase chain 4L (98 aa).

3 helical membrane passes run 1–21 (MPLI…GMLI), 29–49 (SLLC…LMAL), and 61–81 (VVLL…LVSI).

The protein belongs to the complex I subunit 4L family. Core subunit of respiratory chain NADH dehydrogenase (Complex I) which is composed of 45 different subunits.

The protein resides in the mitochondrion inner membrane. It catalyses the reaction a ubiquinone + NADH + 5 H(+)(in) = a ubiquinol + NAD(+) + 4 H(+)(out). In terms of biological role, core subunit of the mitochondrial membrane respiratory chain NADH dehydrogenase (Complex I) which catalyzes electron transfer from NADH through the respiratory chain, using ubiquinone as an electron acceptor. Part of the enzyme membrane arm which is embedded in the lipid bilayer and involved in proton translocation. This is NADH-ubiquinone oxidoreductase chain 4L (MT-ND4L) from Hylobates lar (Lar gibbon).